Reading from the N-terminus, the 670-residue chain is CLK4-associating serine/arginine rich protein (670 aa).

Ser-101 bears the Phosphoserine mark. Disordered stretches follow at residues 171 to 232 (TVAE…GMAD) and 258 to 670 (EKAM…HYRH). A compositionally biased stretch (acidic residues) spans 182–214 (PEEEESPAEEESNSDEDEVIPDIDVEVDVDELN). Residues 265–283 (RRSRRQRREFREKRLRGRK) show a composition bias toward basic residues. 2 positions are modified to phosphoserine: Ser-285 and Ser-294. Residues 290-313 (ARRDSPTYDPYKRSPSESSSESRS) are compositionally biased toward basic and acidic residues. Residue Thr-327 is modified to Phosphothreonine. Ser-331 and Ser-335 each carry phosphoserine. A compositionally biased stretch (low complexity) spans 340–355 (AAAAAAAAASGAATGK). Residues 356 to 365 (PPAPPQPGGP) are compositionally biased toward pro residues. A compositionally biased stretch (low complexity) spans 378-400 (STSSSSSSASRTSSSRSRSSSSS). 2 stretches are compositionally biased toward basic residues: residues 411–443 (SGRH…RRHS) and 481–491 (RGGRGPRHHSS). The span at 492–529 (SRSSWSLSPSRSRSLTRSRSPSLSRSRSLSRSRSQSHS) shows a compositional bias: low complexity. At Ser-543 the chain carries Phosphoserine. Thr-569 is subject to Phosphothreonine. A coiled-coil region spans residues 581–643 (ALNRQFKADK…ERQYSRQSRS (63 aa)). 2 stretches are compositionally biased toward basic and acidic residues: residues 586-613 (FKAD…ELRA) and 621-637 (KERE…ERQY). Low complexity predominate over residues 638–647 (SRQSRSPSPR). Residues 655 to 670 (SRRRSRSRSRSPHYRH) show a composition bias toward basic residues.

Belongs to the splicing factor SR family. Probably interacts with CLK4. In terms of processing, phosphorylated in vitro by CLK4.

It is found in the nucleus. In terms of biological role, probably functions as an alternative splicing regulator. May regulate the mRNA splicing of genes such as CLK1. May act by regulating members of the CLK kinase family. The protein is CLK4-associating serine/arginine rich protein (CLASRP) of Bos taurus (Bovine).